The primary structure comprises 475 residues: Ribulose bisphosphate carboxylase large chain (475 aa).

Residues 1 to 2 constitute a propeptide that is removed on maturation; it reads MS. Proline 3 carries the N-acetylproline modification. Lysine 14 is subject to N6,N6,N6-trimethyllysine. 2 residues coordinate substrate: asparagine 123 and threonine 173. Lysine 175 (proton acceptor) is an active-site residue. Lysine 177 is a substrate binding site. Lysine 201, aspartate 203, and glutamate 204 together coordinate Mg(2+). Position 201 is an N6-carboxylysine (lysine 201). Histidine 294 serves as the catalytic Proton acceptor. Residues arginine 295, histidine 327, and serine 379 each contribute to the substrate site.

It belongs to the RuBisCO large chain family. Type I subfamily. In terms of assembly, heterohexadecamer of 8 large chains and 8 small chains; disulfide-linked. The disulfide link is formed within the large subunit homodimers. It depends on Mg(2+) as a cofactor. Post-translationally, the disulfide bond which can form in the large chain dimeric partners within the hexadecamer appears to be associated with oxidative stress and protein turnover.

Its subcellular location is the plastid. The protein localises to the chloroplast. The enzyme catalyses 2 (2R)-3-phosphoglycerate + 2 H(+) = D-ribulose 1,5-bisphosphate + CO2 + H2O. It carries out the reaction D-ribulose 1,5-bisphosphate + O2 = 2-phosphoglycolate + (2R)-3-phosphoglycerate + 2 H(+). RuBisCO catalyzes two reactions: the carboxylation of D-ribulose 1,5-bisphosphate, the primary event in carbon dioxide fixation, as well as the oxidative fragmentation of the pentose substrate in the photorespiration process. Both reactions occur simultaneously and in competition at the same active site. The chain is Ribulose bisphosphate carboxylase large chain from Viscum album (European mistletoe).